Consider the following 479-residue polypeptide: Long-chain acyl-protein thioester reductase (479 aa).

Belongs to the LuxC family.

The catalysed reaction is a long-chain fatty aldehyde + NADP(+) + CoA = a long-chain fatty acyl-CoA + NADPH + H(+). The protein operates within lipid metabolism; fatty acid reduction for biolumincescence. Functionally, luxC is the fatty acid reductase enzyme responsible for synthesis of the aldehyde substrate for the luminescent reaction catalyzed by luciferase. This Aliivibrio fischeri (Vibrio fischeri) protein is Long-chain acyl-protein thioester reductase (luxC).